Here is a 664-residue protein sequence, read N- to C-terminus: Zinc finger protein 800 (664 aa).

The C2H2-type 1; degenerate zinc finger occupies 69 to 91; it reads FECKLCRSLFRGLPNLITHKKFY. Residue lysine 132 forms a Glycyl lysine isopeptide (Lys-Gly) (interchain with G-Cter in SUMO2) linkage. Polar residues-rich tracts occupy residues 154–179 and 207–224; these read IEVTESSSTPEQTEVQIQETSTEQSK and SDEQPQESQADLETSDNS. Positions 154-224 are disordered; it reads IEVTESSSTP…QADLETSDNS (71 aa). Residues 230-253 form a C2H2-type 2 zinc finger; that stretch reads LICCLCRKEFNSRRGVRRHIRKVH. A Glycyl lysine isopeptide (Lys-Gly) (interchain with G-Cter in SUMO2) cross-link involves residue lysine 279. The C2H2-type 3 zinc finger occupies 287–310; that stretch reads RSCPVCCKSFATKANVRRHFDEVH. A Phosphoserine modification is found at serine 317. Threonine 319 bears the Phosphothreonine mark. Residues 328-349 are disordered; sequence QPLFLDSISPKKSFKTRKQKSS. A Phosphoserine modification is found at serine 336. The segment covering 339-348 has biased composition (basic residues); the sequence is KSFKTRKQKS. The C2H2-type 4 zinc-finger motif lies at 357-382; that stretch reads TACKCLLCKRKYSSQIMLKRHMQIVH. The segment at 388-476 is disordered; it reads GTNSKREKGP…GGQQKTRKPK (89 aa). Residue lysine 392 forms a Glycyl lysine isopeptide (Lys-Gly) (interchain with G-Cter in SUMO2) linkage. Lysine 409 participates in a covalent cross-link: Glycyl lysine isopeptide (Lys-Gly) (interchain with G-Cter in SUMO1); alternate. Residue lysine 409 forms a Glycyl lysine isopeptide (Lys-Gly) (interchain with G-Cter in SUMO2); alternate linkage. The segment covering 416–436 has biased composition (polar residues); the sequence is VESSPPSITHSPQNELKGTNH. Phosphoserine is present on residues serine 422, serine 426, serine 455, serine 457, serine 460, and serine 462. Positions 458–470 are enriched in polar residues; it reads PKSTSPSAAGGQQ. Residue lysine 476 forms a Glycyl lysine isopeptide (Lys-Gly) (interchain with G-Cter in SUMO2) linkage. 2 C2H2-type zinc fingers span residues 486–508 and 519–542; these read LYCKLCKRQFTSKQNLTKHIELH and YKCPLCTYETRRKRDVIRHITVVH. Disordered stretches follow at residues 574–599 and 635–664; these read KRGPSRDEAKHSDSKHDGTSNSPSKK and HHKKTHKANASNSPEGNKTKGRSTRSKALV. Residues 577 to 591 are compositionally biased toward basic and acidic residues; it reads PSRDEAKHSDSKHDG. A Glycyl lysine isopeptide (Lys-Gly) (interchain with G-Cter in SUMO2) cross-link involves residue lysine 599. Residues 618 to 640 form a C2H2-type 7 zinc finger; sequence HRCNKCGKAFAKKTYLEHHKKTH. Residues 653 to 664 show a composition bias toward basic residues; sequence TKGRSTRSKALV.

Belongs to the krueppel C2H2-type zinc-finger protein family.

It is found in the nucleus. Functionally, may be involved in transcriptional regulation. The chain is Zinc finger protein 800 (ZNF800) from Homo sapiens (Human).